The chain runs to 388 residues: Succinate--CoA ligase [ADP-forming] subunit beta (388 aa).

Residues 9–244 (KQLFAEYGLP…PSQDDAREAH (236 aa)) form the ATP-grasp domain. Residues K46, 53 to 55 (GRG), E99, T102, and E107 each bind ATP. Positions 199 and 213 each coordinate Mg(2+). Substrate contacts are provided by residues N264 and 321–323 (GIV).

Belongs to the succinate/malate CoA ligase beta subunit family. Heterotetramer of two alpha and two beta subunits. The cofactor is Mg(2+).

It catalyses the reaction succinate + ATP + CoA = succinyl-CoA + ADP + phosphate. It carries out the reaction GTP + succinate + CoA = succinyl-CoA + GDP + phosphate. The protein operates within carbohydrate metabolism; tricarboxylic acid cycle; succinate from succinyl-CoA (ligase route): step 1/1. Its function is as follows. Succinyl-CoA synthetase functions in the citric acid cycle (TCA), coupling the hydrolysis of succinyl-CoA to the synthesis of either ATP or GTP and thus represents the only step of substrate-level phosphorylation in the TCA. The beta subunit provides nucleotide specificity of the enzyme and binds the substrate succinate, while the binding sites for coenzyme A and phosphate are found in the alpha subunit. This chain is Succinate--CoA ligase [ADP-forming] subunit beta, found in Pseudomonas paraeruginosa (strain DSM 24068 / PA7) (Pseudomonas aeruginosa (strain PA7)).